Reading from the N-terminus, the 119-residue chain is Ribonuclease P protein component (119 aa).

The protein belongs to the RnpA family. Consists of a catalytic RNA component (M1 or rnpB) and a protein subunit.

It carries out the reaction Endonucleolytic cleavage of RNA, removing 5'-extranucleotides from tRNA precursor.. Its function is as follows. RNaseP catalyzes the removal of the 5'-leader sequence from pre-tRNA to produce the mature 5'-terminus. It can also cleave other RNA substrates such as 4.5S RNA. The protein component plays an auxiliary but essential role in vivo by binding to the 5'-leader sequence and broadening the substrate specificity of the ribozyme. The chain is Ribonuclease P protein component from Cronobacter sakazakii (strain ATCC BAA-894) (Enterobacter sakazakii).